Here is a 460-residue protein sequence, read N- to C-terminus: V-type ATP synthase beta chain (460 aa).

It belongs to the ATPase alpha/beta chains family.

Functionally, produces ATP from ADP in the presence of a proton gradient across the membrane. The V-type beta chain is a regulatory subunit. The polypeptide is V-type ATP synthase beta chain (Thermotoga neapolitana (strain ATCC 49049 / DSM 4359 / NBRC 107923 / NS-E)).